The chain runs to 508 residues: Replication factor C large subunit (508 aa).

43-50 (GSPGIGKT) is an ATP binding site. Residues 425–508 (AVEHSGGVFE…DQQSGLSDFM (84 aa)) form a disordered region. 2 stretches are compositionally biased toward acidic residues: residues 443–461 (GDSDADGDAPDTDAGEESG) and 483–500 (TTDDETETASEAAEDDDQ).

It belongs to the activator 1 small subunits family. RfcL subfamily. As to quaternary structure, heteromultimer composed of small subunits (RfcS) and large subunits (RfcL).

Part of the RFC clamp loader complex which loads the PCNA sliding clamp onto DNA. The sequence is that of Replication factor C large subunit from Haloarcula marismortui (strain ATCC 43049 / DSM 3752 / JCM 8966 / VKM B-1809) (Halobacterium marismortui).